An 809-amino-acid polypeptide reads, in one-letter code: DNA replication helicase (809 aa).

72–79 is an ATP binding site; the sequence is GTAGAGKS.

Belongs to the herpesviridae helicase family. Associates with the primase and the primase-associated factor to form the helicase-primase complex.

Its subcellular location is the host nucleus. Component of the helicase/primase complex. Unwinds the DNA at the replication forks and generates single-stranded DNA for both leading and lagging strand synthesis. The primase synthesizes short RNA primers on the lagging strand that the polymerase elongates using dNTPs. Possesses helicase-like motifs and therefore may act as the helicase subunit of the complex. The sequence is that of DNA replication helicase from Epstein-Barr virus (strain B95-8) (HHV-4).